The primary structure comprises 706 residues: Probable rhamnogalacturonate lyase B (706 aa).

The signal sequence occupies residues 1 to 19 (MRLLHPLIPASLLLTLTSA). Asn-27, Asn-40, Asn-143, Asn-239, Asn-285, Asn-380, Asn-495, Asn-569, Asn-597, and Asn-638 each carry an N-linked (GlcNAc...) asparagine glycan.

The protein belongs to the polysaccharide lyase 4 family.

It is found in the secreted. The enzyme catalyses Endotype eliminative cleavage of L-alpha-rhamnopyranosyl-(1-&gt;4)-alpha-D-galactopyranosyluronic acid bonds of rhamnogalacturonan I domains in ramified hairy regions of pectin leaving L-rhamnopyranose at the reducing end and 4-deoxy-4,5-unsaturated D-galactopyranosyluronic acid at the non-reducing end.. In terms of biological role, pectinolytic enzymes consist of four classes of enzymes: pectin lyase, polygalacturonase, pectin methylesterase and rhamnogalacturonase. Degrades the rhamnogalacturonan I (RG-I) backbone of pectin. This is Probable rhamnogalacturonate lyase B (rglB) from Aspergillus niger (strain ATCC MYA-4892 / CBS 513.88 / FGSC A1513).